A 305-amino-acid chain; its full sequence is tRNA dimethylallyltransferase (305 aa).

8 to 15 (GPTASGKT) provides a ligand contact to ATP. 10 to 15 (TASGKT) contributes to the substrate binding site. Residues 33–36 (DSQQ) are interaction with substrate tRNA.

It belongs to the IPP transferase family. Monomer. Mg(2+) is required as a cofactor.

The catalysed reaction is adenosine(37) in tRNA + dimethylallyl diphosphate = N(6)-dimethylallyladenosine(37) in tRNA + diphosphate. Functionally, catalyzes the transfer of a dimethylallyl group onto the adenine at position 37 in tRNAs that read codons beginning with uridine, leading to the formation of N6-(dimethylallyl)adenosine (i(6)A). The polypeptide is tRNA dimethylallyltransferase (Anaeromyxobacter dehalogenans (strain 2CP-1 / ATCC BAA-258)).